Here is a 467-residue protein sequence, read N- to C-terminus: Uronate isomerase (467 aa).

This sequence belongs to the metallo-dependent hydrolases superfamily. Uronate isomerase family.

It catalyses the reaction D-glucuronate = D-fructuronate. The catalysed reaction is aldehydo-D-galacturonate = keto-D-tagaturonate. It functions in the pathway carbohydrate metabolism; pentose and glucuronate interconversion. This is Uronate isomerase from Histophilus somni (strain 2336) (Haemophilus somnus).